The primary structure comprises 474 residues: MSKKLLIKTWGCQMNEYDSSKMADLLNAANGYELTEEPEEADVLLLNTCSIREKAQEKVFHQLGRWKTLKDKKPGVVIGVGGCVATQEGDHIRERAPYVDVIFGPQTLHRLPEMIKQSQTDDAPVMDISFPEIEKFDRLPEPRAEGATAFVSIMEGCSKYCTYCVVPYTRGEEVSRPMDDVLFEIAQLAEQGVREVNLLGQNVNAYRGPMHDGEICSFAELLRLVASIDGIDRIRFTTSHPLEFTDDIIAVYEDTPELVSFLHLPVQSGSDRILTMMKRPHTAIEYKSIIRKLRKARPDIQISSDFIVGFPGETDKDFQDTMKLIKDVDFDMSFSFIFSPRPGTPAADYPCDIPEQVKKERLYELQQTINAQAMRYSRLMLATEQRVLVEGPSKKNLMELRARTENNRVVNFEGSADLIGQFVDVKITDVFANSLRGELVRTEKDMDLRSVISPTQMMAKTRREDELGVATFTP.

Residues 3–120 (KKLLIKTWGC…LPEMIKQSQT (118 aa)) form the MTTase N-terminal domain. Residues Cys-12, Cys-49, Cys-83, Cys-157, Cys-161, and Cys-164 each contribute to the [4Fe-4S] cluster site. Residues 143 to 375 (RAEGATAFVS…QQTINAQAMR (233 aa)) enclose the Radical SAM core domain. The TRAM domain occupies 378–441 (RLMLATEQRV…ANSLRGELVR (64 aa)).

It belongs to the methylthiotransferase family. MiaB subfamily. As to quaternary structure, monomer. The cofactor is [4Fe-4S] cluster.

It is found in the cytoplasm. It carries out the reaction N(6)-dimethylallyladenosine(37) in tRNA + (sulfur carrier)-SH + AH2 + 2 S-adenosyl-L-methionine = 2-methylsulfanyl-N(6)-dimethylallyladenosine(37) in tRNA + (sulfur carrier)-H + 5'-deoxyadenosine + L-methionine + A + S-adenosyl-L-homocysteine + 2 H(+). Its function is as follows. Catalyzes the methylthiolation of N6-(dimethylallyl)adenosine (i(6)A), leading to the formation of 2-methylthio-N6-(dimethylallyl)adenosine (ms(2)i(6)A) at position 37 in tRNAs that read codons beginning with uridine. The polypeptide is tRNA-2-methylthio-N(6)-dimethylallyladenosine synthase (Vibrio parahaemolyticus serotype O3:K6 (strain RIMD 2210633)).